We begin with the raw amino-acid sequence, 211 residues long: Putative ATP-dependent Clp protease proteolytic subunit-like (211 aa).

The tract at residues 1–24 is disordered; the sequence is MTRPSARHVLPEFTERTSAGTRTS. His-129 is an active-site residue.

Belongs to the peptidase S14 family.

Has lost one of the conserved residue (Ser) proposed to be part of the active site. Therefore it could be inactive. The protein is Putative ATP-dependent Clp protease proteolytic subunit-like of Streptomyces coelicolor (strain ATCC BAA-471 / A3(2) / M145).